The chain runs to 510 residues: GMP synthase [glutamine-hydrolyzing] (510 aa).

One can recognise a Glutamine amidotransferase type-1 domain in the interval 5–195 (PILVVNFGSQ…IYGVCKAEKN (191 aa)). C82 (nucleophile) is an active-site residue. Catalysis depends on residues H169 and E171. The 190-residue stretch at 196 to 385 (WEMGDFIHEK…LGVPEEILRR (190 aa)) folds into the GMPS ATP-PPase domain. ATP is bound at residue 223-229 (SGGVDST).

In terms of assembly, homodimer.

The enzyme catalyses XMP + L-glutamine + ATP + H2O = GMP + L-glutamate + AMP + diphosphate + 2 H(+). It participates in purine metabolism; GMP biosynthesis; GMP from XMP (L-Gln route): step 1/1. In terms of biological role, catalyzes the synthesis of GMP from XMP. The polypeptide is GMP synthase [glutamine-hydrolyzing] (guaA) (Aquifex aeolicus (strain VF5)).